Reading from the N-terminus, the 448-residue chain is Delta(14)-sterol reductase ERG24 (448 aa).

7 consecutive transmembrane segments (helical) span residues 18–38 (ISGA…FYLL), 75–95 (CWSA…LLPG), 108–128 (VLNY…LLLA), 157–177 (IIIC…ISFI), 251–271 (VTDS…DGVL), 279–299 (MIDI…LAWV), and 318–338 (NLGW…FYIF). NADP(+)-binding positions include Lys-345, Arg-349, Leu-368, Trp-373, and 380-381 (NY). The helical transmembrane segment at 394-414 (PTGFQTPLTYFYVIYFASLLI) threads the bilayer. Residues Asp-420, 424-428 (CRAKY), and Tyr-435 each bind NADP(+).

This sequence belongs to the ERG4/ERG24 family.

It localises to the endoplasmic reticulum membrane. It carries out the reaction 4,4-dimethyl-5alpha-cholesta-8,24-dien-3beta-ol + NADP(+) = 4,4-dimethyl-5alpha-cholesta-8,14,24-trien-3beta-ol + NADPH + H(+). Its pathway is steroid biosynthesis; zymosterol biosynthesis; zymosterol from lanosterol: step 2/6. Functionally, C-14 sterol reductase; part of the third module of ergosterol biosynthesis pathway that includes the late steps of the pathway. ERG24 reduces the C14=C15 double bond of 4,4-dimethyl-cholesta-8,14,24-trienol to produce 4,4-dimethyl-cholesta-8,24-dienol. The third module or late pathway involves the ergosterol synthesis itself through consecutive reactions that mainly occur in the endoplasmic reticulum (ER) membrane. Firstly, the squalene synthase ERG9 catalyzes the condensation of 2 farnesyl pyrophosphate moieties to form squalene, which is the precursor of all steroids. Squalene synthase is crucial for balancing the incorporation of farnesyl diphosphate (FPP) into sterol and nonsterol isoprene synthesis. Secondly, the squalene epoxidase ERG1 catalyzes the stereospecific oxidation of squalene to (S)-2,3-epoxysqualene, which is considered to be a rate-limiting enzyme in steroid biosynthesis. Then, the lanosterol synthase ERG7 catalyzes the cyclization of (S)-2,3 oxidosqualene to lanosterol, a reaction that forms the sterol core. In the next steps, lanosterol is transformed to zymosterol through a complex process involving various demethylation, reduction and desaturation reactions. The lanosterol 14-alpha-demethylase ERG11 (also known as CYP51) catalyzes C14-demethylation of lanosterol to produce 4,4'-dimethyl cholesta-8,14,24-triene-3-beta-ol, which is critical for ergosterol biosynthesis. The C-14 reductase ERG24 reduces the C14=C15 double bond of 4,4-dimethyl-cholesta-8,14,24-trienol to produce 4,4-dimethyl-cholesta-8,24-dienol. 4,4-dimethyl-cholesta-8,24-dienol is substrate of the C-4 demethylation complex ERG25-ERG26-ERG27 in which ERG25 catalyzes the three-step monooxygenation required for the demethylation of 4,4-dimethyl and 4alpha-methylsterols, ERG26 catalyzes the oxidative decarboxylation that results in a reduction of the 3-beta-hydroxy group at the C-3 carbon to an oxo group, and ERG27 is responsible for the reduction of the keto group on the C-3. ERG28 has a role as a scaffold to help anchor ERG25, ERG26 and ERG27 to the endoplasmic reticulum and ERG29 regulates the activity of the iron-containing C4-methylsterol oxidase ERG25. Then, the sterol 24-C-methyltransferase ERG6 catalyzes the methyl transfer from S-adenosyl-methionine to the C-24 of zymosterol to form fecosterol. The C-8 sterol isomerase ERG2 catalyzes the reaction which results in unsaturation at C-7 in the B ring of sterols and thus converts fecosterol to episterol. The sterol-C5-desaturase ERG3 then catalyzes the introduction of a C-5 double bond in the B ring to produce 5-dehydroepisterol. The C-22 sterol desaturase ERG5 further converts 5-dehydroepisterol into ergosta-5,7,22,24(28)-tetraen-3beta-ol by forming the C-22(23) double bond in the sterol side chain. Finally, ergosta-5,7,22,24(28)-tetraen-3beta-ol is substrate of the C-24(28) sterol reductase ERG4 to produce ergosterol. The sequence is that of Delta(14)-sterol reductase ERG24 from Candida albicans (strain SC5314 / ATCC MYA-2876) (Yeast).